Consider the following 25-residue polypeptide: Antimicrobial peptide scolopin-2 (25 aa).

Expressed by the venom gland.

It is found in the secreted. In terms of biological role, antimicrobial peptide against both Gram-positive, -negative and yeast. Also induces histamine release by mast cells and shows moderate hemolytic activities against both human and rabbit red cells. This Scolopendra mutilans (Chinese red-headed centipede) protein is Antimicrobial peptide scolopin-2.